The following is a 502-amino-acid chain: Membrane protein insertase YidC (502 aa).

Helical transmembrane passes span 12-32 (FLIFTILMFLFITAYELFYIY), 286-306 (LDWGTLKIIVKPLFLFLYWIY), 312-332 (WVLSILVLTFIVRIFLFPLGY), 382-402 (LPILLQIPIFFALYKVLIITV), 409-429 (FLWIPSLADKDPYYILPVIMG), and 452-472 (ITSVAFTLLFINFPAGLVLYW).

The protein belongs to the OXA1/ALB3/YidC family. Type 1 subfamily. In terms of assembly, interacts with the Sec translocase complex via SecD. Specifically interacts with transmembrane segments of nascent integral membrane proteins during membrane integration.

It is found in the cell membrane. Functionally, required for the insertion and/or proper folding and/or complex formation of integral membrane proteins into the membrane. Involved in integration of membrane proteins that insert both dependently and independently of the Sec translocase complex, as well as at least some lipoproteins. Aids folding of multispanning membrane proteins. This Aquifex aeolicus (strain VF5) protein is Membrane protein insertase YidC.